The chain runs to 448 residues: Exodeoxyribonuclease 7 large subunit (448 aa).

Belongs to the XseA family. Heterooligomer composed of large and small subunits.

The protein localises to the cytoplasm. The catalysed reaction is Exonucleolytic cleavage in either 5'- to 3'- or 3'- to 5'-direction to yield nucleoside 5'-phosphates.. In terms of biological role, bidirectionally degrades single-stranded DNA into large acid-insoluble oligonucleotides, which are then degraded further into small acid-soluble oligonucleotides. The polypeptide is Exodeoxyribonuclease 7 large subunit (Shewanella sp. (strain ANA-3)).